A 197-amino-acid polypeptide reads, in one-letter code: Suppressor of RNA silencing p3 (197 aa).

Belongs to the tenuiviruses p3 protein family. As to quaternary structure, homodimer.

The protein resides in the host cytoplasm. Acts as a suppressor of RNA-mediated gene silencing, also known as post-transcriptional gene silencing (PTGS), presumably through the binding of dsRNA. In Rottboellia (Sorghum), this protein is Suppressor of RNA silencing p3.